The following is a 186-amino-acid chain: MNTIRNSICLTIITMVLCGFLFPLAITLIGQIFFYQQANGSLITYDNRIVGSKLIGQHWTETRYFHGRPSAVDYNMNPEKLYKNGVSSGGSNESNGNTELIARMKHHVKFGNSNVTIDAATSSGSGLDPHITVENALKQAPRIADARHVSTSRVADLIQHRKQRGVLTNDYVNVLELNIALDKMKD.

Residues Leu10 to Gly30 traverse the membrane as a helical segment.

This sequence belongs to the KdpC family. In terms of assembly, the system is composed of three essential subunits: KdpA, KdpB and KdpC.

Its subcellular location is the cell membrane. Its function is as follows. Part of the high-affinity ATP-driven potassium transport (or Kdp) system, which catalyzes the hydrolysis of ATP coupled with the electrogenic transport of potassium into the cytoplasm. This subunit acts as a catalytic chaperone that increases the ATP-binding affinity of the ATP-hydrolyzing subunit KdpB by the formation of a transient KdpB/KdpC/ATP ternary complex. The sequence is that of Potassium-transporting ATPase KdpC subunit 1 from Staphylococcus aureus (strain Mu50 / ATCC 700699).